Here is a 296-residue protein sequence, read N- to C-terminus: GTPase Era (296 aa).

Positions 7-174 (KAGYISIVGR…TEVIRHYLPE (168 aa)) constitute an Era-type G domain. The segment at 15–22 (GRPNVGKS) is G1. 15-22 (GRPNVGKS) is a binding site for GTP. A G2 region spans residues 41 to 45 (QTTRH). Residues 62–65 (DTPG) form a G3 region. Residues 62-66 (DTPGF) and 123-126 (NKID) each bind GTP. The segment at 123–126 (NKID) is G4. Positions 153-155 (VSA) are G5. One can recognise a KH type-2 domain in the interval 205–281 (IGEEVPYSVS…YLEIWVKVKS (77 aa)).

This sequence belongs to the TRAFAC class TrmE-Era-EngA-EngB-Septin-like GTPase superfamily. Era GTPase family. In terms of assembly, monomer.

It is found in the cytoplasm. It localises to the cell inner membrane. An essential GTPase that binds both GDP and GTP, with rapid nucleotide exchange. Plays a role in 16S rRNA processing and 30S ribosomal subunit biogenesis and possibly also in cell cycle regulation and energy metabolism. This Nitrosomonas eutropha (strain DSM 101675 / C91 / Nm57) protein is GTPase Era.